Reading from the N-terminus, the 122-residue chain is Large ribosomal subunit protein bL12 (122 aa).

This sequence belongs to the bacterial ribosomal protein bL12 family. In terms of assembly, homodimer. Part of the ribosomal stalk of the 50S ribosomal subunit. Forms a multimeric L10(L12)X complex, where L10 forms an elongated spine to which 2 to 4 L12 dimers bind in a sequential fashion. Binds GTP-bound translation factors.

Forms part of the ribosomal stalk which helps the ribosome interact with GTP-bound translation factors. Is thus essential for accurate translation. The sequence is that of Large ribosomal subunit protein bL12 from Deinococcus radiodurans (strain ATCC 13939 / DSM 20539 / JCM 16871 / CCUG 27074 / LMG 4051 / NBRC 15346 / NCIMB 9279 / VKM B-1422 / R1).